Consider the following 142-residue polypeptide: MVLSPADKTNVKAAWGKVGAHAGEYGAEALERMFLSFPTTKTYFPHFDLSHGSAQVKGHGKKVADALTNAVAHVDDMPNALSALSDLHAHKLRVDPVNFKLLSHCLLVTLAAHLPAEFTPAVHASLDKFLASVSTVLTSKYR.

Residues 2–142 enclose the Globin domain; that stretch reads VLSPADKTNV…VSTVLTSKYR (141 aa). A Phosphoserine modification is found at Ser4. Lys8 is subject to N6-succinyllysine. Thr9 bears the Phosphothreonine mark. Lys12 is subject to N6-succinyllysine. N6-acetyllysine; alternate is present on Lys17. Lys17 carries the N6-succinyllysine; alternate modification. Residue Tyr25 is modified to Phosphotyrosine. Ser36 carries the phosphoserine modification. The residue at position 41 (Lys41) is an N6-succinyllysine. Residue Ser50 is modified to Phosphoserine. Residue His59 coordinates O2. His88 is a heme b binding site. Position 103 is a phosphoserine (Ser103). Thr109 is modified (phosphothreonine). Phosphoserine occurs at positions 125 and 132. 2 positions are modified to phosphothreonine: Thr135 and Thr138. Phosphoserine is present on Ser139.

This sequence belongs to the globin family. Heterotetramer of two alpha chains and two beta chains in adult hemoglobin A (HbA); two alpha chains and two delta chains in adult hemoglobin A2 (HbA2); two alpha chains and two epsilon chains in early embryonic hemoglobin Gower-2; two alpha chains and two gamma chains in fetal hemoglobin F (HbF). In terms of tissue distribution, red blood cells.

Functionally, involved in oxygen transport from the lung to the various peripheral tissues. Its function is as follows. Hemopressin acts as an antagonist peptide of the cannabinoid receptor CNR1. Hemopressin-binding efficiently blocks cannabinoid receptor CNR1 and subsequent signaling. The chain is Hemoglobin subunit alpha (HBA1) from Pan paniscus (Pygmy chimpanzee).